We begin with the raw amino-acid sequence, 105 residues long: Large ribosomal subunit protein uL18c (105 aa).

The protein belongs to the universal ribosomal protein uL18 family. As to quaternary structure, part of the 50S ribosomal subunit; contacts the 5S rRNA.

Its subcellular location is the plastid. The protein resides in the chloroplast. Its function is as follows. Binds 5S rRNA, forms part of the central protuberance of the 50S subunit. The sequence is that of Large ribosomal subunit protein uL18c (rpl18) from Cyanidium caldarium (Red alga).